We begin with the raw amino-acid sequence, 125 residues long: Fluoride-specific ion channel FluC (125 aa).

Helical transmembrane passes span 1–21 (MIQA…RYYV), 32–52 (AFPW…GVFA), 68–88 (LLIT…LDAI), and 101–121 (IYIA…LAVM). Na(+)-binding residues include glycine 75 and threonine 78.

This sequence belongs to the fluoride channel Fluc/FEX (TC 1.A.43) family.

It is found in the cell inner membrane. It catalyses the reaction fluoride(in) = fluoride(out). Its activity is regulated as follows. Na(+) is not transported, but it plays an essential structural role and its presence is essential for fluoride channel function. Functionally, fluoride-specific ion channel. Important for reducing fluoride concentration in the cell, thus reducing its toxicity. The sequence is that of Fluoride-specific ion channel FluC from Rhizobium etli (strain CIAT 652).